Reading from the N-terminus, the 117-residue chain is Glycine cleavage system H-like protein (117 aa).

Residues 21–103 (IVRLGLSSRM…ESEGWFVVLQ (83 aa)) form the Lipoyl-binding domain. At Lys62 the chain carries N6-lipoyllysine.

Belongs to the GcvH family. It depends on (R)-lipoate as a cofactor.

This chain is Glycine cleavage system H-like protein, found in Chlamydia muridarum (strain MoPn / Nigg).